A 501-amino-acid polypeptide reads, in one-letter code: Fumarate reductase 2 (501 aa).

A mitochondrion-targeting transit peptide spans 1–32; it reads MIRSVRRVFIYVSIFVLIIVLKRTLSGTDQTS. 37–51 lines the FAD pocket; that stretch reads VVVIGSGLAGLTTSN. Residues histidine 281 and arginine 304 contribute to the active site.

This sequence belongs to the FAD-dependent oxidoreductase 2 family. FRD/SDH subfamily. FAD serves as cofactor.

The protein localises to the mitochondrion. It catalyses the reaction succinate + NAD(+) = fumarate + NADH + H(+). Functionally, irreversibly catalyzes the reduction of fumarate to succinate. Together with the second isozyme of soluble fumarate reductase (FRD1), essential for anaerobic growth. Involved in maintaining redox balance during oxygen deficiency conditions. Reduction of fumarate is the main source of succinate during fermentation, and under anaerobic conditions, the formation of succinate is strictly required for the reoxidation of FADH(2). The polypeptide is Fumarate reductase 2 (OSM1) (Saccharomyces cerevisiae (strain ATCC 204508 / S288c) (Baker's yeast)).